A 427-amino-acid chain; its full sequence is MSTVVLVGAQWGDEGKGKVTDFLAEKADLVVRYQGGNNAGHTVVVGDREFKLHLIPSGILYPDKICVIGNGVVIDPAVLIGEMEALAKQGISTANLKISQRAHVIFPYHQRLDQVEENRKGSGKIGTTCRGIGPAYTDKSARIGIRMADLVDEEVFAALLEQNMKDKNHLFTRVYGLPPLDYGSVLESYRGYAKALKGYVTDISIIINEAIKQGKNILFEGAQGTLLDIDHGTYPYVTSSHPVAAAACIGVGIGPTRINRVIGVAKAYITRVGEGPFPTEMKDELGDYIRKKGGEFGTTTGRPRRCGWFDGVAGRYAVRVNGLDYLAVTKLDVLSGLEKVKICTGYLYHGDILNEFPASLKVLRECVPVYDELPGWQEDISGARKLSDLPANARRYLERIGEVTGAPIALIGVGSRRSQTILTAELY.

Residues 12–18 (GDEGKGK) and 40–42 (GHT) each bind GTP. Asp13 serves as the catalytic Proton acceptor. Residues Asp13 and Gly40 each coordinate Mg(2+). Residues 13 to 16 (DEGK), 38 to 41 (NAGH), Thr128, Arg142, Gln223, Thr238, and Arg302 each bind IMP. Residue His41 is the Proton donor of the active site. 298–304 (TTTGRPR) lines the substrate pocket. GTP is bound by residues Arg304, 330-332 (KLD), and 412-414 (GVG).

Belongs to the adenylosuccinate synthetase family. Homodimer. It depends on Mg(2+) as a cofactor.

It is found in the cytoplasm. The enzyme catalyses IMP + L-aspartate + GTP = N(6)-(1,2-dicarboxyethyl)-AMP + GDP + phosphate + 2 H(+). Its pathway is purine metabolism; AMP biosynthesis via de novo pathway; AMP from IMP: step 1/2. Plays an important role in the de novo pathway of purine nucleotide biosynthesis. Catalyzes the first committed step in the biosynthesis of AMP from IMP. This is Adenylosuccinate synthetase from Pelotomaculum thermopropionicum (strain DSM 13744 / JCM 10971 / SI).